The following is a 226-amino-acid chain: MTDGTRELVIAMDGPAGAGKSTVARIVANRLGYLYIDTGAMYRALALKALRLGIPETDAAALADLADATEVELQRAPDGGNRVLLDGEDVTAEIRSPAVSAVVSQVSAVPRLRQRLIEVQRSMARAGGVVMDGRDIGSYVLPHADRKFYITASLQERARRRVAQLRAEGHEADLAAVEAEIARRDEQDMNKGVHSLVQLPESIVIDTTGKRVDEVVEEILRHCRRT.

Gly-14–Thr-22 lines the ATP pocket.

It belongs to the cytidylate kinase family. Type 1 subfamily.

Its subcellular location is the cytoplasm. The enzyme catalyses CMP + ATP = CDP + ADP. It carries out the reaction dCMP + ATP = dCDP + ADP. The sequence is that of Cytidylate kinase from Symbiobacterium thermophilum (strain DSM 24528 / JCM 14929 / IAM 14863 / T).